The sequence spans 539 residues: Interleukin-2 receptor subunit beta (539 aa).

The N-terminal stretch at 1–26 is a signal peptide; that stretch reads MATIALPWSLSLYVFLLLLATPWASA. The Extracellular segment spans residues 27-240; sequence AVKNCSHLEC…RTRPADPMKE (214 aa). N-linked (GlcNAc...) asparagine glycans are attached at residues Asn-30, Asn-43, Asn-55, and Asn-71. A disulfide bridge connects residues Cys-36 and Cys-46. The cysteines at positions 74 and 86 are disulfide-linked. The 101-residue stretch at 135-235 folds into the Fibronectin type-III domain; sequence APHSLQVLHI…QPLTFRTRPA (101 aa). N-linked (GlcNAc...) asparagine glycans are attached at residues Asn-150 and Asn-216. A WSXWS motif motif is present at residues 221-225; that stretch reads WSPWS. The chain crosses the membrane as a helical span at residues 241 to 268; sequence ILPMSWLRYLLLVLGCFSGFFSCVYILV. The Cytoplasmic segment spans residues 269-539; sequence KCRYLGPWLK…LQAQDSVHLI (271 aa). The short motif at 281-289 is the Box 1 motif element; it reads LKCHIPDPS. 3 disordered regions span residues 395–419, 440–465, and 477–516; these read VEEDGSRLPEGSPHPPLLPLAGEQD, PNTAYGGSRAPEERSPLSLHEGLPSL, and LERMPEGDGEGLSANSSGEQASVPEGNLHGQDQDRGQGPI.

It belongs to the type I cytokine receptor family. Type 4 subfamily. As to quaternary structure, non-covalent dimer of an alpha and a beta subunit. IL2R exists in 3 different forms: a high affinity dimer, an intermediate affinity monomer (beta subunit), and a low affinity monomer (alpha subunit). The high and intermediate affinity forms also associate with a gamma subunit. Interacts with SHB upon interleukin stimulation.

It is found in the cell membrane. It localises to the cell surface. Functionally, receptor for interleukin-2. This beta subunit is involved in receptor mediated endocytosis and transduces the mitogenic signals of IL2. Probably in association with IL15RA, involved in the stimulation of neutrophil phagocytosis by IL15. This Mus musculus (Mouse) protein is Interleukin-2 receptor subunit beta (Il2rb).